Reading from the N-terminus, the 435-residue chain is Light-independent protochlorophyllide reductase subunit N (435 aa).

[4Fe-4S] cluster contacts are provided by C23, C48, and C108.

Belongs to the BchN/ChlN family. Protochlorophyllide reductase is composed of three subunits; ChlL, ChlN and ChlB. Forms a heterotetramer of two ChlB and two ChlN subunits. It depends on [4Fe-4S] cluster as a cofactor.

It is found in the plastid. Its subcellular location is the chloroplast. It catalyses the reaction chlorophyllide a + oxidized 2[4Fe-4S]-[ferredoxin] + 2 ADP + 2 phosphate = protochlorophyllide a + reduced 2[4Fe-4S]-[ferredoxin] + 2 ATP + 2 H2O. The protein operates within porphyrin-containing compound metabolism; chlorophyll biosynthesis (light-independent). Component of the dark-operative protochlorophyllide reductase (DPOR) that uses Mg-ATP and reduced ferredoxin to reduce ring D of protochlorophyllide (Pchlide) to form chlorophyllide a (Chlide). This reaction is light-independent. The NB-protein (ChlN-ChlB) is the catalytic component of the complex. The sequence is that of Light-independent protochlorophyllide reductase subunit N from Chlorella vulgaris (Green alga).